A 186-amino-acid chain; its full sequence is Coiled-coil domain-containing protein ORF13 (186 aa).

Coiled coils occupy residues 2–30 (GIKEKEIELETLKREIAQAEASLEQDFIK) and 63–85 (LREKLTDKVSKAMDLSDEIQRDK).

This chain is Coiled-coil domain-containing protein ORF13, found in Helicobacter pylori (strain 35A).